We begin with the raw amino-acid sequence, 114 residues long: 11.9 kDa wall protein (114 aa).

Residues 1–6 (MSFKTR) constitute a propeptide that is removed on maturation.

It is found in the secreted. The protein resides in the cell wall. May play a role in the structure of the hypha-forming fruit bodies. The chain is 11.9 kDa wall protein (TDF-1) from Tuber dryophilum (Truffle).